Reading from the N-terminus, the 255-residue chain is Flap endonuclease Xni (255 aa).

Asp-105 lines the Mg(2+) pocket. The 5'-3' exonuclease domain maps to 162-254; the sequence is EHKQFIDYLA…LKQFRLPKAN (93 aa). K(+) contacts are provided by Leu-172, Ala-173, Pro-181, Val-183, and Ile-186. Positions 185 to 190 are interaction with DNA; the sequence is GIGPKS.

This sequence belongs to the Xni family. Requires Mg(2+) as cofactor. The cofactor is K(+).

Has flap endonuclease activity. During DNA replication, flap endonucleases cleave the 5'-overhanging flap structure that is generated by displacement synthesis when DNA polymerase encounters the 5'-end of a downstream Okazaki fragment. This Shewanella piezotolerans (strain WP3 / JCM 13877) protein is Flap endonuclease Xni.